The chain runs to 835 residues: BCL11 transcription factor A (835 aa).

Over residues 1 to 12 (MSRRKQGKPQHL) the composition is skewed to basic residues. Residues 1 to 41 (MSRRKQGKPQHLSKREFSPEPLEAILTDDEPDHGPLGAPEG) are disordered. A required for nuclear body formation and for SUMO1 recruitment region spans residues 1–210 (MSRRKQGKPQ…SEHGSPLTPR (210 aa)). Residues 45 to 71 (LLTCGQCQMNFPLGDILIFIEHKRKQC) form a C2HC-type zinc finger. Residues C48, C51, H66, and C71 each contribute to the Zn(2+) site. Position 86 is a phosphoserine (S86). Glycyl lysine isopeptide (Lys-Gly) (interchain with G-Cter in SUMO2) cross-links involve residues K123 and K164. The C2H2-type 1 zinc-finger motif lies at 170–193 (YTCTTCKQPFTSAWFLLQHAQNTH). Position 205 is a phosphoserine (S205). R271 is modified (asymmetric dimethylarginine). The tract at residues 323–376 (AGNTSSPPLSPGRPSPMQRLLQPFQPGSKPPFLATPPLPPLQSAPPPSQPPVKS) is disordered. Phosphoserine is present on residues S332 and S337. Over residues 355-372 (LATPPLPPLQSAPPPSQP) the composition is skewed to pro residues. 2 consecutive C2H2-type zinc fingers follow at residues 377-399 (KSCEFCGKTFKFQSNLVVHRRSH) and 405-429 (YKCNLCDHACTQASKLKRHMKTHMH). The segment covering 421-430 (KRHMKTHMHK) has biased composition (basic residues). Disordered regions lie at residues 421 to 458 (KRHMKTHMHKSSPMTVKSDDGLSTASSPEPGTSDLVGS), 471 to 512 (KSEN…ERVD), and 572 to 619 (RGHL…GLSK). Over residues 441–450 (GLSTASSPEP) the composition is skewed to polar residues. 2 positions are modified to phosphoserine: S446 and S447. The segment covering 482–506 (NGDEEEEEDDEEEEEEEEEEEEELT) has biased composition (acidic residues). Over residues 574–584 (HLAEAEGHRDT) the composition is skewed to basic and acidic residues. S608 is modified (phosphoserine). K620 participates in a covalent cross-link: Glycyl lysine isopeptide (Lys-Gly) (interchain with G-Cter in SUMO2). Residues S625 and S630 each carry the phosphoserine modification. Residue K634 forms a Glycyl lysine isopeptide (Lys-Gly) (interchain with G-Cter in SUMO1) linkage. Residues 678 to 740 (DSRQSPFASS…GRPSSKEGRR (63 aa)) are disordered. Positions 682–696 (SPFASSSEHSSENGS) are enriched in low complexity. T701 bears the Phosphothreonine mark. Residues 706–720 (LDGGISGRSGTGSGG) show a composition bias toward gly residues. A DNA-binding region spans residues 737–835 (EGRRSDTCEY…RVLNNDIKTE (99 aa)). Residues 742–764 (DTCEYCGKVFKNCSNLTVHRRSH) form a C2H2-type 4 zinc finger. Zn(2+)-binding residues include C744, C747, H760, and H764. A disordered region spans residues 765–769 (TGERP). A C2H2-type 5 zinc finger spans residues 770–792 (YKCELCNYACAQSSKLTRHMKTH). Zn(2+) contacts are provided by C772, C775, H788, and H792. Residues 793–799 (GQVGKDV) form a disordered region. A C2H2-type 6 zinc finger spans residues 800–823 (YKCEICKMPFSVYSTLEKHMKKWH). Positions 802, 805, 818, and 823 each coordinate Zn(2+). K833 is covalently cross-linked (Glycyl lysine isopeptide (Lys-Gly) (interchain with G-Cter in SUMO2)).

As to quaternary structure, homotetrameric; self-associates via C2HC-type zinc finger domain. Interacts with MTA2, a component of the nucleosome remodeling and deacetylase (NuRD) repressor complex. Interacts (via its C2H2-type zinc finger domains 4, 5 and 6) with promoter region of gamma-globulin. Interacts with NR2F1, PIAS3, NR2F2 and NR2F6. Isoform 1, isoform 2 and isoform 3 form homodimers and heterodimers. Isoform 2 interacts with TBR1. Sumoylated with SUMO1. Expressed at high levels in brain, spleen thymus, bone marrow and testis. Expressed in CD34-positive myeloid precursor cells, B-cells, monocytes and megakaryocytes. Expression is tightly regulated during B-cell development. In terms of tissue distribution, expressed in fetal and adult brain, and in the plasmacytoid dendritic cell.

It is found in the cytoplasm. It localises to the nucleus. The protein localises to the chromosome. Its subcellular location is the nucleus matrix. Transcription factor. Associated with the BAF SWI/SNF chromatin remodeling complex. Binds to the 5'-TGACCA-3' sequence motif in regulatory regions of target genes, including a distal promoter of the HBG1 hemoglobin subunit gamma-1 gene. Involved in regulation of the developmental switch from gamma- to beta-globin, probably via direct repression of HBG1; hence indirectly repressing fetal hemoglobin (HbF) level. Involved in brain development. May play a role in hematopoiesis. Essential factor in lymphopoiesis required for B-cell formation in fetal liver. May function as a modulator of the transcriptional repression activity of NR2F2. This chain is BCL11 transcription factor A (BCL11A), found in Homo sapiens (Human).